Reading from the N-terminus, the 3564-residue chain is CUB and sushi domain-containing protein 1 (3564 aa).

The first 26 residues, 1-26 (MTAWRRFQSLLLLLGLLVLCARLLTA), serve as a signal peptide directing secretion. Topologically, residues 27-3487 (AKGQNCGGLV…SHYHGTSSGS (3461 aa)) are extracellular. 10 disulfide bridges follow: cysteine 32/cysteine 58, cysteine 145/cysteine 185, cysteine 171/cysteine 202, cysteine 208/cysteine 234, cysteine 349/cysteine 389, cysteine 375/cysteine 406, cysteine 411/cysteine 437, cysteine 527/cysteine 567, cysteine 553/cysteine 580, and cysteine 584/cysteine 610. One can recognise a CUB 1 domain in the interval 32-140 (CGGLVQGPNG…QGFKALYEVL (109 aa)). Asparagine 40 and asparagine 57 each carry an N-linked (GlcNAc...) asparagine glycan. The 62-residue stretch at 143 to 204 (HTCGNPGEIL…WDFPAPFCRA (62 aa)) folds into the Sushi 1 domain. A CUB 2 domain is found at 208–312 (CGGTLRGTSS…KGFNAQFQVK (105 aa)). The 62-residue stretch at 347–408 (DMCPDPGIPE…WSDHRPICRA (62 aa)) folds into the Sushi 2 domain. The CUB 3 domain occupies 411-522 (CGSNLRGPSG…PGFKAVYQEI (112 aa)). The region spanning 525–582 (GGCGDPGIPAYGKRTGSSFLHGDTLTFECPAAFELVGERVITCQQNNQWSGNKPSCVF) is the Sushi 3 domain. In terms of domain architecture, CUB 4 spans 584–692 (CFFNFTASSG…RGFNITYTTF (109 aa)). 2 N-linked (GlcNAc...) asparagine glycosylation sites follow: asparagine 587 and asparagine 686. The 62-residue stretch at 695–756 (NECHDPGIPI…WSSTVPRCEA (62 aa)) folds into the Sushi 4 domain. 6 disulfides stabilise this stretch: cysteine 697–cysteine 738, cysteine 723–cysteine 754, cysteine 758–cysteine 784, cysteine 873–cysteine 913, cysteine 899–cysteine 926, and cysteine 930–cysteine 956. Positions 758-866 (CGGHLTASSG…IGFLIHYESV (109 aa)) constitute a CUB 5 domain. Residues 871–928 (DSCLDPGIPVNGHRHGGDFGIRSTVTFSCDPGYTLSDDEPLVCERNHQWNHALPSCDA) enclose the Sushi 5 domain. Residues 930-1040 (CGGYIQGKSG…EGFNITFSEY (111 aa)) enclose the CUB 6 domain. N-linked (GlcNAc...) asparagine glycans are attached at residues asparagine 955, asparagine 1015, and asparagine 1034. Residues 1043 to 1102 (EPCDDPGVPAFSRRIGFHFGVGDSLTFSCFLGYRLEGATKLTCLGGGRRVWSAPLPRCVA) enclose the Sushi 6 domain. 3 disulfides stabilise this stretch: cysteine 1045-cysteine 1085, cysteine 1071-cysteine 1100, and cysteine 1104-cysteine 1130. Residues 1104-1212 (CGASVKGNEG…QGFQLTYTSF (109 aa)) enclose the CUB 7 domain. Asparagine 1184 and asparagine 1197 each carry an N-linked (GlcNAc...) asparagine glycan. The Sushi 7 domain maps to 1215–1275 (VKCEDPGIPN…WDKPLPSCIA (61 aa)). Disulfide bonds link cysteine 1217-cysteine 1258, cysteine 1244-cysteine 1273, cysteine 1277-cysteine 1304, cysteine 1391-cysteine 1431, cysteine 1417-cysteine 1447, cysteine 1451-cysteine 1477, cysteine 1564-cysteine 1604, cysteine 1590-cysteine 1621, cysteine 1625-cysteine 1651, cysteine 1741-cysteine 1781, cysteine 1767-cysteine 1798, and cysteine 1802-cysteine 1828. Residues 1277 to 1386 (CGGQIHAATS…SGFSIQFSTS (110 aa)) enclose the CUB 8 domain. In terms of domain architecture, Sushi 8 spans 1389–1449 (ATCNDPGMPQ…WQPDPPTCIA (61 aa)). An N-linked (GlcNAc...) asparagine glycan is attached at asparagine 1399. The CUB 9 domain maps to 1451–1559 (CGGNLTGPAG…SGFAIEFKEK (109 aa)). N-linked (GlcNAc...) asparagine glycans are attached at residues asparagine 1454 and asparagine 1572. The 62-residue stretch at 1562 to 1623 (EACFDPGNIM…WDQVLPSCNA (62 aa)) folds into the Sushi 9 domain. In terms of domain architecture, CUB 10 spans 1625–1733 (CGGQYTGSEG…RGFHFVYQAV (109 aa)). Asparagine 1644 is a glycosylation site (N-linked (GlcNAc...) asparagine). Residues 1739–1800 (TQCSSVPEPR…WNDTIPSCVV (62 aa)) enclose the Sushi 10 domain. Asparagine 1792, asparagine 1805, and asparagine 1882 each carry an N-linked (GlcNAc...) asparagine glycan. Positions 1802 to 1910 (CSGNFTQRRG…AGFHLEYKTV (109 aa)) constitute a CUB 11 domain. In terms of domain architecture, Sushi 11 spans 1913–1972 (AACQEPALPSNSIKIGDRYMVNDVLSFQCEPGYTLQGRSHISCMPGTVRRWNYPSPLCIA). Disulfide bonds link cysteine 1915-cysteine 1955, cysteine 1941-cysteine 1970, and cysteine 1974-cysteine 2000. The 109-residue stretch at 1974–2082 (CGGTLSTLGG…QGFKLAYQAY (109 aa)) folds into the CUB 12 domain. A glycan (N-linked (GlcNAc...) asparagine) is linked at asparagine 2018. The 60-residue stretch at 2085–2144 (QNCPDPPPFQNGYMINSDYSVGQSVSFECYPGYILIGHPVLTCQHGINRNWNYPFPRCDA) folds into the Sushi 12 domain. Cystine bridges form between cysteine 2087-cysteine 2127, cysteine 2113-cysteine 2142, and cysteine 2146-cysteine 2172. The CUB 13 domain maps to 2146–2257 (CGYNVTSQNG…LNFHAFQLKK (112 aa)). N-linked (GlcNAc...) asparagine glycosylation is found at asparagine 2149, asparagine 2154, and asparagine 2187. The Sushi 13 domain maps to 2256-2317 (KKCQPPPAVP…FEGSLPTCEA (62 aa)). 3 cysteine pairs are disulfide-bonded: cysteine 2258–cysteine 2300, cysteine 2286–cysteine 2315, and cysteine 2319–cysteine 2347. The 112-residue stretch at 2319-2430 (CPANEVRTGS…KGFKIRYAAP (112 aa)) folds into the CUB 14 domain. Asparagine 2358, asparagine 2394, asparagine 2400, asparagine 2445, asparagine 2470, and asparagine 2503 each carry an N-linked (GlcNAc...) asparagine glycan. Sushi domains follow at residues 2430–2492 (PYCS…LCQA), 2493–2554 (VSCG…TCKP), 2555–2619 (VACP…SCRV), 2620–2677 (ISCG…RCLA), 2678–2735 (GHCG…VCVP), 2736–2793 (ITCG…TCRV), 2794–2856 (VNCS…KCLA), 2857–2914 (ISCG…HCTG), 2918–2975 (GFCG…VCEA), 2976–3034 (VSCG…DCTI), 3035–3094 (ISCG…VCKA), 3095–3152 (VLCP…QCLP), 3153–3210 (VFCG…TCID), 3214–3272 (NTCP…ECIP), and 3273–3332 (HACR…VCKS). 12 cysteine pairs are disulfide-bonded: cysteine 2432–cysteine 2473, cysteine 2459–cysteine 2490, cysteine 2495–cysteine 2537, cysteine 2521–cysteine 2552, cysteine 2557–cysteine 2602, cysteine 2588–cysteine 2617, cysteine 2622–cysteine 2662, cysteine 2648–cysteine 2675, cysteine 2680–cysteine 2720, cysteine 2706–cysteine 2733, cysteine 2738–cysteine 2778, and cysteine 2764–cysteine 2791. N-linked (GlcNAc...) asparagine glycosylation is present at asparagine 2605. N-linked (GlcNAc...) asparagine glycans are attached at residues asparagine 2750 and asparagine 2761. A glycan (N-linked (GlcNAc...) asparagine) is linked at asparagine 2795. 18 disulfide bridges follow: cysteine 2796-cysteine 2841, cysteine 2827-cysteine 2854, cysteine 2859-cysteine 2899, cysteine 2885-cysteine 2912, cysteine 2920-cysteine 2960, cysteine 2946-cysteine 2973, cysteine 2978-cysteine 3019, cysteine 3005-cysteine 3032, cysteine 3037-cysteine 3079, cysteine 3063-cysteine 3092, cysteine 3097-cysteine 3137, cysteine 3123-cysteine 3150, cysteine 3155-cysteine 3195, cysteine 3181-cysteine 3208, cysteine 3216-cysteine 3257, cysteine 3243-cysteine 3270, cysteine 3275-cysteine 3317, and cysteine 3302-cysteine 3330. Asparagine 2894 carries N-linked (GlcNAc...) asparagine glycosylation. Asparagine 2963 carries N-linked (GlcNAc...) asparagine glycosylation. N-linked (GlcNAc...) asparagine glycosylation is found at asparagine 3022 and asparagine 3056. Residue asparagine 3105 is glycosylated (N-linked (GlcNAc...) asparagine). Residues asparagine 3228 and asparagine 3260 are each glycosylated (N-linked (GlcNAc...) asparagine). N-linked (GlcNAc...) asparagine glycans are attached at residues asparagine 3339, asparagine 3379, and asparagine 3386. A helical transmembrane segment spans residues 3488-3508 (VAAAILVPFFALILSGFAFYL). At 3509-3564 (YKHRTRPKVQYNGYAGHENSNGQASFENPMYDTNLKPTEAKAVRFDTTLNTVCTVV) the chain is on the cytoplasmic side.

Belongs to the CSMD family. Weakly expressed in most tissues, except in brain. Expressed at intermediate level in brain, including cerebellum, substantia nigra, hippocampus and fetal brain.

Its subcellular location is the membrane. In terms of biological role, potential suppressor of squamous cell carcinomas. This chain is CUB and sushi domain-containing protein 1 (CSMD1), found in Homo sapiens (Human).